A 264-amino-acid polypeptide reads, in one-letter code: Forkhead box protein pes-1 (264 aa).

2 disordered regions span residues 15 to 36 (DLDNCSSLPPTPPKTASPGNSK) and 50 to 93 (DSST…PTKR). Positions 50 to 64 (DSSTSSSCSVSPASS) are enriched in low complexity. Residues 70–89 (ESVGQQQSGRNSPVSSSTES) are compositionally biased toward polar residues. Residues 93 to 186 (RPKYSYNALI…ISNNCGKLRR (94 aa)) constitute a DNA-binding region (fork-head).

The protein resides in the nucleus. It is found in the cytoplasm. Functionally, transcription factor. Plays a role in embryogenesis and later development, perhaps acting redundantly with forkhead protein fkh-2. The chain is Forkhead box protein pes-1 from Caenorhabditis elegans.